The sequence spans 738 residues: Dipeptidyl peptidase 3 (738 aa).

At Ala2 the chain carries N-acetylalanine. A Zn(2+)-binding site is contributed by His450. Glu451 is a catalytic residue. 2 residues coordinate Zn(2+): His455 and Glu508.

It belongs to the peptidase M49 family. Zn(2+) is required as a cofactor.

It is found in the cytoplasm. The enzyme catalyses Release of an N-terminal dipeptide from a peptide comprising four or more residues, with broad specificity. Also acts on dipeptidyl 2-naphthylamides.. Inhibited by spinorphin, an opioid peptide derived from hemoglobin. Its function is as follows. Cleaves and degrades bioactive peptides, including angiotensin, Leu-enkephalin and Met-enkephalin. Also cleaves Arg-Arg-beta-naphthylamide. The polypeptide is Dipeptidyl peptidase 3 (Dpp3) (Rattus norvegicus (Rat)).